A 1115-amino-acid chain; its full sequence is Calcium-transporting ATPase PAT1 (1115 aa).

Residues 1 to 99 are Stromal-facing; sequence MTGSHEMESI…SIVLDALSDH (99 aa). A helical membrane pass occupies residues 100–120; the sequence is ILILLIVAAVVSIVLGSIDYT. At 121–126 the chain is on the lumenal side; the sequence is SDHPET. The helical transmembrane segment at 127-147 threads the bilayer; sequence GWIDGVAILVAVILVVGITSL. At 148 to 235 the chain is on the stromal side; it reads NDFKNQARFR…KGQPQDNMDP (88 aa). A helical transmembrane segment spans residues 236–256; it reads FLISGSMVIEGFGTMLVTAVG. Topologically, residues 257–287 are lumenal; that stretch reads VNSFNGKTMMGLRVASEDTPLQMKLSVLASR. The helical transmembrane segment at 288–308 threads the bilayer; it reads IGYFGMGAAILMLLIAIPKYF. Over 309-328 the chain is Stromal; the sequence is IQRKVHDIEITREDAQPIVQ. Residues 329 to 349 form a helical membrane-spanning segment; the sequence is LVISAITIVVVAVPEGLPLAV. Over 350–735 the chain is Lumenal; the sequence is TMALAYGMMK…GRNIYDAICK (386 aa). Catalysis depends on Asp385, which acts as the 4-aspartylphosphate intermediate. 2 residues coordinate Mg(2+): Asp678 and Asp682. The helical transmembrane segment at 736–756 threads the bilayer; it reads FLQFQLTVNVVAVTVAFIGTL. At 757 to 832 the chain is on the stromal side; the sequence is TSDVVEDKDN…GKNAPLITRS (76 aa). Positions 762-784 are disordered; that stretch reads EDKDNSSSSGSADKVTEEEPRQG. A helical transmembrane segment spans residues 833-853; that stretch reads MWKNIIGQAALQLAILFTILY. At 854–873 the chain is on the lumenal side; the sequence is QGHNIFQHFVPQAHGPIIKN. A helical membrane pass occupies residues 874–894; the sequence is GLHHYTLVFNCFVFLQLFNEI. Topologically, residues 895 to 913 are stromal; the sequence is NARVLGSRTNPFKNFFNNP. A helical transmembrane segment spans residues 914–934; that stretch reads IFIAVMIFTLGVQIIFVTFGG. Topologically, residues 935–943 are lumenal; it reads SATSTDSLY. Residues 944–964 traverse the membrane as a helical segment; the sequence is IVEWICCVVVGAISLPVGLLL. Residues 965-1115 lie on the Stromal side of the membrane; sequence RKIPIREPVV…LHLPVNQINN (151 aa). Positions 984–1056 are disordered; sequence AVYTSPSPNP…IPSSSSNLVN (73 aa). Residues 1040–1053 show a composition bias toward low complexity; that stretch reads NDNINTPIPSSSSN.

The protein belongs to the cation transport ATPase (P-type) (TC 3.A.3) family. Type IIB subfamily.

It localises to the contractile vacuole membrane. The protein localises to the cell membrane. It catalyses the reaction Ca(2+)(in) + ATP + H2O = Ca(2+)(out) + ADP + phosphate + H(+). In terms of biological role, calcium ATPase involved in Ca(2+) homeostasis as a component of the contractile vacuole complex. This is Calcium-transporting ATPase PAT1 (patA) from Dictyostelium discoideum (Social amoeba).